Consider the following 417-residue polypeptide: 4-hydroxy-3-methylbut-2-en-1-yl diphosphate synthase (flavodoxin) (417 aa).

The [4Fe-4S] cluster site is built by cysteine 304, cysteine 307, cysteine 350, and glutamate 357.

It belongs to the IspG family. Requires [4Fe-4S] cluster as cofactor.

It catalyses the reaction (2E)-4-hydroxy-3-methylbut-2-enyl diphosphate + oxidized [flavodoxin] + H2O + 2 H(+) = 2-C-methyl-D-erythritol 2,4-cyclic diphosphate + reduced [flavodoxin]. It participates in isoprenoid biosynthesis; isopentenyl diphosphate biosynthesis via DXP pathway; isopentenyl diphosphate from 1-deoxy-D-xylulose 5-phosphate: step 5/6. Converts 2C-methyl-D-erythritol 2,4-cyclodiphosphate (ME-2,4cPP) into 1-hydroxy-2-methyl-2-(E)-butenyl 4-diphosphate. The polypeptide is 4-hydroxy-3-methylbut-2-en-1-yl diphosphate synthase (flavodoxin) (Rhizobium meliloti (strain 1021) (Ensifer meliloti)).